We begin with the raw amino-acid sequence, 245 residues long: Complement C1q subcomponent subunit C (245 aa).

The first 28 residues, 1-28 (MVVGTSCQPQHGLYLLLLLLALPLRSQA), serve as a signal peptide directing secretion. One can recognise a Collagen-like domain in the interval 31-112 (GCYGIPGMPG…GPPGEPGEEG (82 aa)). Residues P36, P39, P42, P45, and P63 each carry the 4-hydroxyproline modification. Residues 42–119 (PGTPGKDGHD…EEGRYKQKHQ (78 aa)) are disordered. 5-hydroxylysine is present on K75. The O-linked (Gal...) hydroxylysine glycan is linked to K75. Residues P81, P96, P99, and P105 each carry the 4-hydroxyproline modification. Residues 98–107 (DPGPRGPPGE) show a composition bias toward pro residues. The C1q domain occupies 115 to 245 (KQKHQSVFTV…VFSGFLLFPD (131 aa)). The cysteines at positions 179 and 193 are disulfide-linked.

As to quaternary structure, core component of the complement C1 complex, a calcium-dependent complex composed of 1 molecule of the C1Q subcomplex, 2 molecules of C1R and 2 molecules of C1S. The C1Q subcomplex is composed 18 subunits: 3 chains of C1QA, C1QB, and C1QC trimerize to form 6 collagen-like triple helices connected to six globular ligand-recognition modules (C1q domain). Post-translationally, O-linked glycans consist of Glc-Gal disaccharides bound to the oxygen atom of post-translationally added hydroxyl groups.

It is found in the secreted. The protein resides in the cell surface. Its activity is regulated as follows. The C1Q subcomplex is inhibited by sulfated molecules, such as triterpenoid sulfates, heparan sulfate, or chondroitin sulfates. Core component of the complement C1 complex, a multiprotein complex that initiates the classical pathway of the complement system, a cascade of proteins that leads to phagocytosis and breakdown of pathogens and signaling that strengthens the adaptive immune system. The classical complement pathway is initiated by the C1Q subcomplex of the C1 complex, which specifically binds IgG or IgM immunoglobulins complexed with antigens, forming antigen-antibody complexes on the surface of pathogens: C1QA, together with C1QB and C1QC, specifically recognizes and binds the Fc regions of IgG or IgM via its C1q domain. Immunoglobulin-binding activates the proenzyme C1R, which cleaves C1S, initiating the proteolytic cascade of the complement system. The C1Q subcomplex is activated by a hexamer of IgG complexed with antigens, while it is activated by a pentameric IgM. The C1Q subcomplex also recognizes and binds phosphatidylserine exposed on the surface of cells undergoing programmed cell death, possibly promoting activation of the complement system. The sequence is that of Complement C1q subcomponent subunit C from Rattus norvegicus (Rat).